The chain runs to 558 residues: Putative transport protein VC0395_A0715/VC395_1212 (558 aa).

The next 5 membrane-spanning stretches (helical) occupy residues 5–25, 37–57, 66–86, 92–112, and 164–184; these read VVLL…AIGL, LGNS…GFSF, FMLF…GIFF, YLIL…FGGY, and VGYA…AKLL. RCK C-terminal domains are found at residues 203 to 290 and 291 to 374; these read RGLG…FRNG and KEVF…KIGF. Helical transmembrane passes span 384-404, 407-427, 441-461, 476-496, 504-524, and 537-557; these read LLAF…TMTF, VSFS…LGFL, ALNM…GLNA, VIGL…LVGA, ALLF…DVVN, and AGTY…FILL.

It belongs to the AAE transporter (TC 2.A.81) family. YbjL subfamily.

The protein resides in the cell membrane. The sequence is that of Putative transport protein VC0395_A0715/VC395_1212 from Vibrio cholerae serotype O1 (strain ATCC 39541 / Classical Ogawa 395 / O395).